A 93-amino-acid polypeptide reads, in one-letter code: Cobalt transport protein CbiN (93 aa).

Helical transmembrane passes span L5–G25 and L63–C83.

Belongs to the CbiN family. In terms of assembly, forms an energy-coupling factor (ECF) transporter complex composed of an ATP-binding protein (A component, CbiO), a transmembrane protein (T component, CbiQ) and 2 possible substrate-capture proteins (S components, CbiM and CbiN) of unknown stoichimetry.

The protein resides in the cell inner membrane. The protein operates within cofactor biosynthesis; adenosylcobalamin biosynthesis. Part of the energy-coupling factor (ECF) transporter complex CbiMNOQ involved in cobalt import. The protein is Cobalt transport protein CbiN of Salmonella agona (strain SL483).